The primary structure comprises 1379 residues: DNA-directed RNA polymerase subunit beta (1379 aa).

It belongs to the RNA polymerase beta chain family. In terms of assembly, the RNAP catalytic core consists of 2 alpha, 1 beta, 1 beta' and 1 omega subunit. When a sigma factor is associated with the core the holoenzyme is formed, which can initiate transcription.

It carries out the reaction RNA(n) + a ribonucleoside 5'-triphosphate = RNA(n+1) + diphosphate. Functionally, DNA-dependent RNA polymerase catalyzes the transcription of DNA into RNA using the four ribonucleoside triphosphates as substrates. This is DNA-directed RNA polymerase subunit beta from Chelativorans sp. (strain BNC1).